The sequence spans 268 residues: Tryptophan synthase alpha chain (268 aa).

Catalysis depends on proton acceptor residues Glu-49 and Asp-60.

Belongs to the TrpA family. In terms of assembly, tetramer of two alpha and two beta chains.

The catalysed reaction is (1S,2R)-1-C-(indol-3-yl)glycerol 3-phosphate + L-serine = D-glyceraldehyde 3-phosphate + L-tryptophan + H2O. The protein operates within amino-acid biosynthesis; L-tryptophan biosynthesis; L-tryptophan from chorismate: step 5/5. Functionally, the alpha subunit is responsible for the aldol cleavage of indoleglycerol phosphate to indole and glyceraldehyde 3-phosphate. This chain is Tryptophan synthase alpha chain, found in Escherichia coli O127:H6 (strain E2348/69 / EPEC).